Here is a 138-residue protein sequence, read N- to C-terminus: Large ribosomal subunit protein uL16 (138 aa).

Basic residues predominate over residues M1–S16. Residues M1–T25 are disordered.

This sequence belongs to the universal ribosomal protein uL16 family. Part of the 50S ribosomal subunit.

Binds 23S rRNA and is also seen to make contacts with the A and possibly P site tRNAs. The chain is Large ribosomal subunit protein uL16 from Rhodococcus erythropolis (strain PR4 / NBRC 100887).